We begin with the raw amino-acid sequence, 51 residues long: Large ribosomal subunit protein eL39 (51 aa).

The span at 1 to 15 shows a compositional bias: basic residues; it reads MPSHKSFRTKQKLAK. The segment at 1–21 is disordered; the sequence is MPSHKSFRTKQKLAKAARQNR.

This sequence belongs to the eukaryotic ribosomal protein eL39 family. As to quaternary structure, component of the large ribosomal subunit (LSU). Mature yeast ribosomes consist of a small (40S) and a large (60S) subunit. The 40S small subunit contains 1 molecule of ribosomal RNA (18S rRNA) and at least 33 different proteins. The large 60S subunit contains 3 rRNA molecules (25S, 5.8S and 5S rRNA) and at least 46 different proteins. eL39 interacts with yih1.

The protein resides in the cytoplasm. In terms of biological role, component of the ribosome, a large ribonucleoprotein complex responsible for the synthesis of proteins in the cell. The small ribosomal subunit (SSU) binds messenger RNAs (mRNAs) and translates the encoded message by selecting cognate aminoacyl-transfer RNA (tRNA) molecules. The large subunit (LSU) contains the ribosomal catalytic site termed the peptidyl transferase center (PTC), which catalyzes the formation of peptide bonds, thereby polymerizing the amino acids delivered by tRNAs into a polypeptide chain. The nascent polypeptides leave the ribosome through a tunnel in the LSU and interact with protein factors that function in enzymatic processing, targeting, and the membrane insertion of nascent chains at the exit of the ribosomal tunnel. This Schizosaccharomyces pombe (strain 972 / ATCC 24843) (Fission yeast) protein is Large ribosomal subunit protein eL39 (rpl39).